A 325-amino-acid polypeptide reads, in one-letter code: DNA-directed RNA polymerase subunit alpha (325 aa).

Positions 1–238 (MSLKSLLKGF…EHLTVFINFE (238 aa)) are alpha N-terminal domain (alpha-NTD). Residues 254-325 (KLKASLSKHV…LGLSFGMRDF (72 aa)) are alpha C-terminal domain (alpha-CTD).

Belongs to the RNA polymerase alpha chain family. Homodimer. The RNAP catalytic core consists of 2 alpha, 1 beta, 1 beta' and 1 omega subunit. When a sigma factor is associated with the core the holoenzyme is formed, which can initiate transcription.

It catalyses the reaction RNA(n) + a ribonucleoside 5'-triphosphate = RNA(n+1) + diphosphate. Functionally, DNA-dependent RNA polymerase catalyzes the transcription of DNA into RNA using the four ribonucleoside triphosphates as substrates. The sequence is that of DNA-directed RNA polymerase subunit alpha from Leptospira borgpetersenii serovar Hardjo-bovis (strain JB197).